Consider the following 356-residue polypeptide: Heparan sulfate 2-O-sulfotransferase 1 (356 aa).

Over M1–K11 the chain is Cytoplasmic. The helical; Signal-anchor for type II membrane protein transmembrane segment at L12 to E28 threads the bilayer. A coiled-coil region spans residues M24–R51. The Lumenal portion of the chain corresponds to N29–N356. Adenosine 3',5'-bisphosphate-binding residues include K83, T84, A85, S86, T87, and S88. Residues N108 and N127 are each glycosylated (N-linked (GlcNAc...) asparagine). Residues H140 and H142 contribute to the active site. Positions 164 and 172 each coordinate adenosine 3',5'-bisphosphate. Intrachain disulfides connect C201-C209 and C222-C228. Adenosine 3',5'-bisphosphate-binding residues include Y279, S285, T290, and K293.

The protein belongs to the sulfotransferase 3 family. As to quaternary structure, homotrimer. Interacts with the C5-epimerase GLCE. N-glycosylated.

The protein resides in the golgi apparatus membrane. In terms of biological role, catalyzes the transfer of a sulfo group from 3'-phospho-5'-adenylyl sulfate (PAPS) to the 2-OH position of iduronic acid (IdoA) or glucuronic acid (GlcA) within the heparan sulfate (HS) chain and participates in HS biosynthesis. Required for metanephric development of kidney formation, suggesting that 2-O-sulfation within HS is essential for signaling between ureteric bud and metanephric mesenchyme. The polypeptide is Heparan sulfate 2-O-sulfotransferase 1 (Homo sapiens (Human)).